Consider the following 30-residue polypeptide: Cyclotide hyen-K (30 aa).

The segment at residues 1–30 (GIPCGESCIFIPCITTVVGCSCSNKVCYDN) is a cross-link (cyclopeptide (Gly-Asn)). Intrachain disulfides connect Cys-4/Cys-20, Cys-8/Cys-22, and Cys-13/Cys-27.

Post-translationally, this is a cyclic peptide. Detected in seeds (at protein level).

Functionally, probably participates in a plant defense mechanism. The chain is Cyclotide hyen-K from Pigea enneasperma (Spade flower).